Reading from the N-terminus, the 549-residue chain is MQNINPTSTAAWKALEAHKGTLENTTINDLFQQEKNRFADYSLTFNNEILVDFSKNKITRETLNLLRRLAKECALDEAKEAMFSGEKINRTENRAVLHTALRNRSNTAVLVDGKDVMPEVNEVLAKMKAFSERVISGEWKGYTGKAITDVVNIGIGGSDLGPYMVTEALRPYKNHLNMHFVSNVDGTHIAEVFKKTNPETTLFLVASKTFTTQETMTNAKSARDWFLATAKDEKHVAKHFAALSTNAAEVEKFGIDTDNMFGFWDWVGGRYSLWSAIGLSIILSVGFENFEALLSGAHEMDKHFRNTPIEQNIPATLALVGLWNTNFQGAQTEAILPYDQYMHRFAAYFQQGNMESNGKYVGRDGKVISNYQTGPIIWGEPGTNGQHAFYQLIHQGTTLIPCDFIAPAKTHNPLADHHNKLLSNFFAQTEALAFGKTKETVEAEFLKAGKSLDEVKDVVPFKVFAGNKPTNSILLQEITPFSLGALIAMYEHKIFVQGVIFNIFSFDQWGVELGKQLANRILPELSGDEQVTGHDSSTNGLINQFKAWR.

Catalysis depends on Glu355, which acts as the Proton donor. Residues His387 and Lys515 contribute to the active site.

Belongs to the GPI family.

The protein resides in the cytoplasm. The catalysed reaction is alpha-D-glucose 6-phosphate = beta-D-fructose 6-phosphate. The protein operates within carbohydrate biosynthesis; gluconeogenesis. Its pathway is carbohydrate degradation; glycolysis; D-glyceraldehyde 3-phosphate and glycerone phosphate from D-glucose: step 2/4. Catalyzes the reversible isomerization of glucose-6-phosphate to fructose-6-phosphate. The protein is Glucose-6-phosphate isomerase of Mannheimia succiniciproducens (strain KCTC 0769BP / MBEL55E).